Consider the following 291-residue polypeptide: N-acetylmannosamine kinase (291 aa).

ATP contacts are provided by residues 5–12 (AIDIGGTK) and 132–139 (GVGGGVVS). 4 residues coordinate Zn(2+): H156, C166, C168, and C173.

This sequence belongs to the ROK (NagC/XylR) family. NanK subfamily. Homodimer.

It catalyses the reaction an N-acyl-D-mannosamine + ATP = an N-acyl-D-mannosamine 6-phosphate + ADP + H(+). Its pathway is amino-sugar metabolism; N-acetylneuraminate degradation; D-fructose 6-phosphate from N-acetylneuraminate: step 2/5. In terms of biological role, catalyzes the phosphorylation of N-acetylmannosamine (ManNAc) to ManNAc-6-P. This Escherichia coli O127:H6 (strain E2348/69 / EPEC) protein is N-acetylmannosamine kinase.